A 128-amino-acid chain; its full sequence is Large ribosomal subunit protein bL17 (128 aa).

The protein belongs to the bacterial ribosomal protein bL17 family. Part of the 50S ribosomal subunit. Contacts protein L32.

This is Large ribosomal subunit protein bL17 from Streptococcus equi subsp. zooepidemicus (strain H70).